Reading from the N-terminus, the 1221-residue chain is Reverse gyrase subunit B (1221 aa).

The segment at 56 to 97 (NEPVAIFGSSCVLCGGDCSSVRLTSRIGICERCLPVDTETLR) adopts an RG N-terminal-type zinc-finger fold. Zn(2+) is bound by residues C66, C69, C85, and C88. ATP contacts are provided by residues Q161 and 178–185 (APTGTGKT). A Helicase ATP-binding domain is found at 165–400 (TRRLVKGCSF…AVVRELFDFE (236 aa)). Residues 284-287 (DDVD) carry the DEAD box motif. The 177-residue stretch at 424–600 (AVERIVRKAG…PLSLNTLMKL (177 aa)) folds into the Helicase C-terminal domain. One can recognise a Toprim domain in the interval 779-935 (SALMIVESPN…QVYRTEFHEV (157 aa)). Residue E785 coordinates Mg(2+). Residues 856–882 (LGRCSECGEQVVGSEECPNCGGEVELK) form an RG C-terminal-type zinc finger. The Zn(2+) site is built by C859, C862, C872, and C875. D904 provides a ligand contact to Mg(2+). Residues 953–1221 (DAGRVSAQIL…MLHLAGVSGR (269 aa)) form the Topo IA-type catalytic domain.

It in the C-terminal section; belongs to the type IA topoisomerase family. The protein in the N-terminal section; belongs to the DEAD box helicase family. DDVD subfamily. In terms of assembly, heterodimer of an RgyrA and RgyrB subunit. The topoisomerase domain is shared between the two subunits. Requires Zn(2+) as cofactor. The cofactor is Mg(2+). In terms of processing, the N-terminus is partially blocked.

The protein localises to the cytoplasm. The enzyme catalyses ATP + H2O = ADP + phosphate + H(+). Its function is as follows. Modifies the topological state of DNA by introducing positive supercoils in an ATP-dependent process; dATP also allows positive supercoiling. Increases the linking number in steps of +1. Only this subunit binds ATP, it does so in a DNA- and RgyA-independent manner. Hydrolyzes ATP only in the presence of DNA. The RgyA subunit transiently cleaves a single DNA strand and remains covalently bound to the 5' DNA end probably through a tyrosine residue. It changes linking number in steps of one, and nicks DNA preferentially at 5'-CNNN | 3'-sites with a strong preference for 4 pyrimidine residues. There are about 1000 heterodimers per cell. May be involved in rewinding the DNA strands in the regions of the chromosome that have opened up to allow transcription or replication. This subunit expressed in E.coli only has DNA-dependent ATPase activity at 80 degrees Celsius. Reverse gyrase activity is reconstituted after incubation at 80 degrees Celsius for 5 minutes, positive supercoiling requires ATP and Mg(2+). In the presence of ATP it binds and nicks substrate but does not make closed product. This chain is Reverse gyrase subunit B, found in Methanopyrus kandleri (strain AV19 / DSM 6324 / JCM 9639 / NBRC 100938).